Here is a 197-residue protein sequence, read N- to C-terminus: Adenylate kinase isoenzyme 6 homolog FAP7 (197 aa).

ATP-binding residues include Gly-17, Gly-19, Lys-20, Ser-21, and Ser-22. An NMPbind region spans residues 38-61; that stretch reads NISDFAKDNDCFEGYDEGRKSHIV. Residues 113 to 123 form an LID region; that stretch reads ARGYHDSKIEE. Arg-114 provides a ligand contact to ATP. The tract at residues 176-197 is disordered; it reads PDGVTNEYQGPRSDDEDDEDSE. Residue Tyr-183 is modified to Phosphotyrosine. Phosphoserine is present on residues Ser-188 and Ser-196.

This sequence belongs to the adenylate kinase family. AK6 subfamily. Interacts with small ribosomal subunit protein uS11B/RPS14B. Not a structural component of 43S pre-ribosomes, but transiently interacts with them by binding to uS11/RPS14.

Its subcellular location is the cytoplasm. The protein resides in the nucleus. The enzyme catalyses AMP + ATP = 2 ADP. It carries out the reaction ATP + H2O = ADP + phosphate + H(+). Functionally, broad-specificity nucleoside monophosphate (NMP) kinase that catalyzes the reversible transfer of the terminal phosphate group between nucleoside triphosphates and monophosphates. Also has ATPase activity. Involved in the late cytoplasmic maturation steps of the 40S ribosomal particles, specifically 18S rRNA maturation. Required for cleavage of the 20S pre-rRNA at site D in the cytoplasm. While NMP activity is not required for ribosome maturation, ATPase activity is. Associates transiently with small ribosomal subunit protein uS11. ATP hydrolysis breaks the interaction with uS11. May temporarily remove uS11 from the ribosome to enable a conformational change of the ribosomal RNA that is needed for the final maturation step of the small ribosomal subunit. Promotes formation of the rotated state in 80S-like ribosomes, a key intermediate in translocation, thereby releasing the essential assembly factor DIM1 from pre-40S subunits. Its NMP activity may have a role in nuclear energy homeostasis. Involved in oxidative stress response. Required for POS9-dependent target gene transcription upon oxidative stress. This Saccharomyces cerevisiae (strain ATCC 204508 / S288c) (Baker's yeast) protein is Adenylate kinase isoenzyme 6 homolog FAP7.